A 213-amino-acid polypeptide reads, in one-letter code: Imidazole glycerol phosphate synthase subunit HisH (213 aa).

The 208-residue stretch at 4-211 (NLGVIDYGMG…LHWLHQGAEP (208 aa)) folds into the Glutamine amidotransferase type-1 domain. Catalysis depends on C82, which acts as the Nucleophile. Catalysis depends on residues H186 and E188.

In terms of assembly, heterodimer of HisH and HisF.

Its subcellular location is the cytoplasm. It catalyses the reaction 5-[(5-phospho-1-deoxy-D-ribulos-1-ylimino)methylamino]-1-(5-phospho-beta-D-ribosyl)imidazole-4-carboxamide + L-glutamine = D-erythro-1-(imidazol-4-yl)glycerol 3-phosphate + 5-amino-1-(5-phospho-beta-D-ribosyl)imidazole-4-carboxamide + L-glutamate + H(+). The catalysed reaction is L-glutamine + H2O = L-glutamate + NH4(+). The protein operates within amino-acid biosynthesis; L-histidine biosynthesis; L-histidine from 5-phospho-alpha-D-ribose 1-diphosphate: step 5/9. Functionally, IGPS catalyzes the conversion of PRFAR and glutamine to IGP, AICAR and glutamate. The HisH subunit catalyzes the hydrolysis of glutamine to glutamate and ammonia as part of the synthesis of IGP and AICAR. The resulting ammonia molecule is channeled to the active site of HisF. The protein is Imidazole glycerol phosphate synthase subunit HisH of Synechococcus sp. (strain CC9902).